The following is a 464-amino-acid chain: 17,18-epoxy-17-hydroxycur-19-ene N-malonyltransferase (464 aa).

Catalysis depends on proton acceptor residues His191 and Asp403.

Belongs to the plant acyltransferase family. As to quaternary structure, monomer. In terms of tissue distribution, mainly expressed in roots.

Its subcellular location is the cytoplasm. It carries out the reaction 17,18-epoxy-17-hydroxycur-19-ene + malonyl-CoA = prestrychnine + CoA. It participates in alkaloid biosynthesis. Malonylransferase involved in the biosynthesis of curare monoterpene indole alkaloids (MIAs), natural products such as strychnine, a neurotoxic compound used as a pesticide to control rodents, and its pharmacologically active derivatives, including brucine, used to regulate blood pressure. Curare alkaloids act as animal glycine receptor antagonists. Catalyzes the conversion of 17,18-epoxy-17-hydroxycur-19-ene (Wieland-Gumlich aldehyde) to prestrychnine, which is spontaneously converted into strychnine and isostrychnine. In Strychnos nux-vomica (Poison nut), this protein is 17,18-epoxy-17-hydroxycur-19-ene N-malonyltransferase.